A 185-amino-acid polypeptide reads, in one-letter code: Elongation factor P (185 aa).

This sequence belongs to the elongation factor P family.

The protein resides in the cytoplasm. The protein operates within protein biosynthesis; polypeptide chain elongation. Functionally, involved in peptide bond synthesis. Stimulates efficient translation and peptide-bond synthesis on native or reconstituted 70S ribosomes in vitro. Probably functions indirectly by altering the affinity of the ribosome for aminoacyl-tRNA, thus increasing their reactivity as acceptors for peptidyl transferase. The polypeptide is Elongation factor P (Desulfitobacterium hafniense (strain DSM 10664 / DCB-2)).